A 261-amino-acid polypeptide reads, in one-letter code: THO complex subunit THP2 (261 aa).

In terms of assembly, component of the THO complex, which is composed of HPR1, MFT1, THO2 and THP2. Together with SUB2, TEX1 and YRA1, THO forms the transcription/export (TREX) complex. THO associates with DNA and RNA in vitro.

It is found in the nucleus. Its function is as follows. Component the THO subcomplex of the TREX complex, which operates in coupling transcription elongation to mRNA export. The THO complex is recruited to transcribed genes and moves along the gene with the elongating polymerase during transcription. THO is important for stabilizing nascent RNA in the RNA polymerase II elongation complex by preventing formation of DNA:RNA hybrids behind the elongating polymerase. It functions in cotranscriptional formation of an export-competent messenger ribonucleoprotein particle (mRNP) by facilitating the loading of ATP-dependent RNA helicase SUB2 and the mRNA export factor YRA1 along the nascent mRNA. The polypeptide is THO complex subunit THP2 (THP2) (Saccharomyces cerevisiae (strain ATCC 204508 / S288c) (Baker's yeast)).